The chain runs to 330 residues: AH receptor-interacting protein (330 aa).

In terms of domain architecture, PPIase FKBP-type spans 31–121; the sequence is GTKATFHFRT…KDPLEGQRHC (91 aa). S43 is subject to Phosphoserine. 3 TPR repeats span residues 179–212, 231–264, and 265–298; these read VPLI…LKNL, TPLL…YDDN, and VKAY…DPAL.

In terms of assembly, interacts with RET in the pituitary gland; this interaction prevents the formation of the AIP-survivin complex.

The protein resides in the cytoplasm. May play a positive role in AHR-mediated (aromatic hydrocarbon receptor) signaling, possibly by influencing its receptivity for ligand and/or its nuclear targeting. In Rattus norvegicus (Rat), this protein is AH receptor-interacting protein (Aip).